The following is a 387-amino-acid chain: Delta(12)-acyl-lipid-desaturase (387 aa).

The disordered stretch occupies residues 1 to 31 (MGAGGRMTVPNKWEGEGDEKSQKPVQRVPSA). The span at 13-22 (WEGEGDEKSQ) shows a compositional bias: basic and acidic residues. A run of 2 helical transmembrane segments spans residues 58 to 78 (SYVLYDLTLVAIFYYVATTYI) and 88 to 108 (AAWPVYWALQGCVLTGVWVIA). The Histidine box-1 motif lies at 109–113 (HECGH). A helical transmembrane segment spans residues 121-141 (WVDDCVGLVLHSALLVPYFSW). Residues 145-149 (HRRHH) carry the Histidine box-2 motif. Transmembrane regions (helical) follow at residues 183–203 (VMTLIVTLTLGWPLYLALNVS), 229–249 (IYISDVGIMAATYTLYKIAAA), and 251–271 (GLAWLVCVYGVPLLIVNAFLV). Residues 319–323 (HVAHH) carry the Histidine box-3 motif.

This sequence belongs to the fatty acid desaturase type 1 family.

It localises to the membrane. Its pathway is lipid metabolism; polyunsaturated fatty acid biosynthesis. In terms of biological role, delta(12)-fatty acid desaturase producing in a heterologous system linoleic acid (18:2(9Z,12Z)) and to a lower extent hexadecadienoic acid (16:2(9Z,12Z)). The chain is Delta(12)-acyl-lipid-desaturase from Punica granatum (Pomegranate).